Consider the following 255-residue polypeptide: tRNA (guanine-N(1)-)-methyltransferase (255 aa).

Residues Gly-117 and 137–142 (IGDYVL) each bind S-adenosyl-L-methionine.

Belongs to the RNA methyltransferase TrmD family. Homodimer.

The protein localises to the cytoplasm. It catalyses the reaction guanosine(37) in tRNA + S-adenosyl-L-methionine = N(1)-methylguanosine(37) in tRNA + S-adenosyl-L-homocysteine + H(+). Functionally, specifically methylates guanosine-37 in various tRNAs. In Glaesserella parasuis serovar 5 (strain SH0165) (Haemophilus parasuis), this protein is tRNA (guanine-N(1)-)-methyltransferase.